A 70-amino-acid polypeptide reads, in one-letter code: Mu-conotoxin-like Am3.4 (70 aa).

An N-terminal signal peptide occupies residues 1 to 20 (MMYKLGVLLIICLLLFPLTA). Residues 21-53 (VPQDGDQPADRPAERMQDDISFEHDRFFDPVKR) constitute a propeptide that is removed on maturation. 3 disulfides stabilise this stretch: Cys-54–Cys-69, Cys-55–Cys-65, and Cys-61–Cys-68. Position 67 is a 4-hydroxyproline; partial; in major form (Pro-67). The residue at position 69 (Cys-69) is a Cysteine amide.

The protein belongs to the conotoxin M superfamily. Contains 3 disulfide bonds. In terms of tissue distribution, expressed by the venom duct.

It is found in the secreted. Mu-conotoxins block voltage-gated sodium channels (Nav). The sequence is that of Mu-conotoxin-like Am3.4 from Conus amadis (Amadis cone).